The following is a 152-amino-acid chain: uncharacterized protein (152 aa).

A signal peptide spans 1–24; it reads MRKMLAYTLYIVTYLTYIMNEVEC.

This is an uncharacterized protein from Acheta domesticus (House cricket).